Consider the following 672-residue polypeptide: Amidase chyE (672 aa).

Cysteine 2 acts as the Nucleophile in catalysis. The 218-residue stretch at 2 to 219 (CGISAFLCHP…PGHYLISRPN (218 aa)) folds into the Glutamine amidotransferase type-2 domain. In terms of domain architecture, Asparagine synthetase spans 250 to 639 (VRKRLLEAVK…TQEAVEKAFT (390 aa)).

It belongs to the asparagine synthetase family.

It functions in the pathway pigment biosynthesis. Amidase; part of the gene cluster that mediates the biosynthesis of the yellow pigment chrysogine. the NRPS chyA mediates the condensation of anthranilic acid and alanine into the intermediate 2-(2-aminopropanamido)benzoic acid. The remainder of the pathway is highly branched yielding at least 13 chrysogine-related compounds. The malonyl transferase chyE converts 2-(2-aminopropanamido)benzoic acid and 2-(2-aminopropanamido)benzamidine into 2-(2-(2-carboxyacetamido)propanamido)benzoic acid and 3-((1-((2-carbamoylphenyl)amino)-1-oxopropan-2-yl)amino)-3-oxopropanoic acid, respectively. ChyD is an amidase, being responsible for the amidation of the carboxylic acid moiety of 2-(2-aminopropanamido)benzoic acid, 2-(2-(2-carboxyacetamido)propanamido)benzoic acid and 2-(2-((4-amino-1-carboxy-4-oxobutyl)amino)propanamido)benzoic acid. ChyC is involved in the same reactions as ChyD, but plays a more minor role in the amidation reactions compared to chyD. The oxidoreductases chyH and chyM are involved in oxidation reactions that form N-pyruvoylanthranilamide from 2-(2-aminopropanamido)benzamidine and (1-((2-carbamoylphenyl)amino)-1-oxopropan-2-yl)glutamine, respectively. N-pyruvoylanthranilamide is further converted via two further branches in the pathway, yielding chrysogine and additional chrysogine-related coumpounds. Chrysogine is likely formed by a spontaneous ring closure from N-pyruvoylanthranilamide. This chain is Amidase chyE, found in Penicillium rubens (strain ATCC 28089 / DSM 1075 / NRRL 1951 / Wisconsin 54-1255) (Penicillium chrysogenum).